We begin with the raw amino-acid sequence, 85 residues long: Small ribosomal subunit protein bS18 (85 aa).

The protein belongs to the bacterial ribosomal protein bS18 family. As to quaternary structure, part of the 30S ribosomal subunit. Forms a tight heterodimer with protein bS6.

Its function is as follows. Binds as a heterodimer with protein bS6 to the central domain of the 16S rRNA, where it helps stabilize the platform of the 30S subunit. The chain is Small ribosomal subunit protein bS18 from Hyphomonas neptunium (strain ATCC 15444).